Here is a 350-residue protein sequence, read N- to C-terminus: Twinfilin-1 (350 aa).

Ser2 is modified (N-acetylserine). An ADF-H 1 domain is found at 2 to 139 (SHQTGIQASE…SLHGYKKYLL (138 aa)). 2 positions are modified to phosphoserine: Ser143 and Ser277. The 139-residue stretch at 175 to 313 (LQGVAFPISR…TADFLYDEVH (139 aa)) folds into the ADF-H 2 domain. Tyr309 is modified (phosphotyrosine). The interval 317 to 350 (HAHKQSFAKPKGPAGKRGIRRLIRGPAEAEATTD) is disordered. Phosphothreonine is present on Thr349.

It belongs to the actin-binding proteins ADF family. Twinfilin subfamily. Interacts with G-actin; ADP-actin form and capping protein (CP). May also be able to interact with TWF2 and phosphoinositides, PI(4,5)P2. When bound to PI(4,5)P2, it is down-regulated. Interacts with ACTG1. Phosphorylated on serine and threonine residues. Widely expressed with highest levels in brain, liver and kidney. Also expressed in heart, lung and testis. Not detected in spleen or skeletal muscle.

Its subcellular location is the cytoplasm. The protein localises to the cytoskeleton. Actin-binding protein involved in motile and morphological processes. Inhibits actin polymerization, likely by sequestering G-actin. By capping the barbed ends of filaments, it also regulates motility. Seems to play an important role in clathrin-mediated endocytosis and distribution of endocytic organelles. The chain is Twinfilin-1 (Twf1) from Mus musculus (Mouse).